Here is a 320-residue protein sequence, read N- to C-terminus: MQTINTFSWINQRITRSISVLLLVYIITRTSISSAYPIFAQRGYENPREATGRIVCANCHLANKPVDIEVPQAVLPDTVFEAVVRIPYDSQLKQVLSNGKKGGLNVGAVIILPEGFELAPPDRLSPQMKEKIGNLSFQNYRPNQKNIIVVGPVPGQKYSEITFPILSPDPATKKDAHFLKYPIYVGGNRGRGQIYPDGSKSNNTFYSATAAGIVSKIIRKEKGGYEITITDASDSHQVVEIIPPGPELLVSEGEYLKFDQPLTSNPNVGGFGQGDGEIVLQDPLRVQGLLFFLASVILAQIFLVLKKKQFEKVQLAEMNL.

A signal peptide spans 1-35 (MQTINTFSWINQRITRSISVLLLVYIITRTSISSA). Residues tyrosine 36, cysteine 56, cysteine 59, and histidine 60 each coordinate heme. A helical transmembrane segment spans residues 286–306 (VQGLLFFLASVILAQIFLVLK).

Belongs to the cytochrome f family. In terms of assembly, the 4 large subunits of the cytochrome b6-f complex are cytochrome b6, subunit IV (17 kDa polypeptide, petD), cytochrome f and the Rieske protein, while the 4 small subunits are PetG, PetL, PetM and PetN. The complex functions as a dimer. Heme serves as cofactor.

It localises to the plastid thylakoid membrane. Functionally, component of the cytochrome b6-f complex, which mediates electron transfer between photosystem II (PSII) and photosystem I (PSI), cyclic electron flow around PSI, and state transitions. In Cuscuta exaltata (Tall dodder), this protein is Cytochrome f.